We begin with the raw amino-acid sequence, 360 residues long: Phospho-N-acetylmuramoyl-pentapeptide-transferase (360 aa).

10 helical membrane passes run 27–47 (IVGL…LIAW), 71–91 (TPTM…LLWA), 97–117 (YVWC…IDDY), 132–152 (WKYF…YAIG), 168–188 (VMPQ…VGTS), 199–219 (GLAI…AWAT), 236–256 (AGEL…FLWF), 263–283 (VFMG…IAVL), 288–308 (FLLV…ILQV), and 338–358 (VIVR…ATLK).

It belongs to the glycosyltransferase 4 family. MraY subfamily. Mg(2+) serves as cofactor.

It localises to the cell inner membrane. The enzyme catalyses UDP-N-acetyl-alpha-D-muramoyl-L-alanyl-gamma-D-glutamyl-meso-2,6-diaminopimeloyl-D-alanyl-D-alanine + di-trans,octa-cis-undecaprenyl phosphate = di-trans,octa-cis-undecaprenyl diphospho-N-acetyl-alpha-D-muramoyl-L-alanyl-D-glutamyl-meso-2,6-diaminopimeloyl-D-alanyl-D-alanine + UMP. It participates in cell wall biogenesis; peptidoglycan biosynthesis. Functionally, catalyzes the initial step of the lipid cycle reactions in the biosynthesis of the cell wall peptidoglycan: transfers peptidoglycan precursor phospho-MurNAc-pentapeptide from UDP-MurNAc-pentapeptide onto the lipid carrier undecaprenyl phosphate, yielding undecaprenyl-pyrophosphoryl-MurNAc-pentapeptide, known as lipid I. The chain is Phospho-N-acetylmuramoyl-pentapeptide-transferase from Proteus mirabilis (strain HI4320).